A 404-amino-acid chain; its full sequence is MQDKSIKKIVLAYSGGLDTSAIIPWLKENYGGCEVVAFVADIGQERGDLEGVEQKALQSGASECHVVDLREEFISEYVYPVLQTGALYEGTYLLGTSMARPIIAKAQVELALKVGADALCHGATGKGNDQVRFETTYTALAPQLKVVAPWREWDLRSREALLDYLKERNIPTTASLEKIYSRDENAWHISTEGGVLESPWNAPNKDCWVWTVDPLEAPDQPEQVTIAVEKGRVVAVNGEALSPFGCLDKLNAIGARHGVGRIDIVENRLVGIKSRGCYETPGGTIMVNALRAVEQLVLDRDSFKWREQLGLEMSYVVYDGRWFAPLRKSIQASAEALAEEVNGEVVLQLYKGQVTAIQKKSANSLYSEEFATFGEDEVYDHRHAGGFIRLFSLSSRIRALNEKK.

ATP-binding positions include 12-20 and alanine 40; that span reads AYSGGLDTS. Positions 92 and 97 each coordinate L-citrulline. ATP is bound at residue glycine 122. Residues threonine 124, asparagine 128, and aspartate 129 each contribute to the L-aspartate site. Asparagine 128 is an L-citrulline binding site. L-citrulline-binding residues include arginine 132, serine 181, serine 190, glutamate 266, and tyrosine 278.

This sequence belongs to the argininosuccinate synthase family. Type 1 subfamily. As to quaternary structure, homotetramer.

Its subcellular location is the cytoplasm. It catalyses the reaction L-citrulline + L-aspartate + ATP = 2-(N(omega)-L-arginino)succinate + AMP + diphosphate + H(+). It functions in the pathway amino-acid biosynthesis; L-arginine biosynthesis; L-arginine from L-ornithine and carbamoyl phosphate: step 2/3. This Erwinia tasmaniensis (strain DSM 17950 / CFBP 7177 / CIP 109463 / NCPPB 4357 / Et1/99) protein is Argininosuccinate synthase.